An 831-amino-acid chain; its full sequence is SID1 transmembrane family member 1 (831 aa).

The signal sequence occupies residues 1 to 19 (MLDCPRLALLCALPWLLRA). Residues 20–308 (AVPGHRAEPL…SVKGSVYVKS (289 aa)) are Extracellular-facing. 4 N-linked (GlcNAc...) asparagine glycosylation sites follow: Asn-67, Asn-83, Asn-136, and Asn-281. Residues 309-329 (SLFSVFVFLSFYLGCLLVVFV) form a helical membrane-spanning segment. At 330-441 (HHMRFQRKPV…DRRIVSKKYK (112 aa)) the chain is on the cytoplasmic side. The segment at 354 to 408 (VSHPITASTPEGSNYGAIDESSSSPGRQMSSSDGGQPCHSDTDSSVEESDFDTMP) is disordered. Residues 374–385 (SSSSPGRQMSSS) show a composition bias toward low complexity. Acidic residues predominate over residues 397–408 (SSVEESDFDTMP). The helical transmembrane segment at 442-462 (IYFWNIITIAVFYALPVMQLV) threads the bilayer. Over 463 to 493 (ITYQTVVNVTGNQDICYYNFLCAHPLGVLSA) the chain is Extracellular. Residue Asn-470 is glycosylated (N-linked (GlcNAc...) asparagine). A helical transmembrane segment spans residues 494–514 (FNNILSNLGHVLLGFLFLLIV). Residues 515–540 (LRRDLLHRRALEAKDIFAMEYGIPKH) lie on the Cytoplasmic side of the membrane. A helical membrane pass occupies residues 541-561 (FGLFYAMGIALMMEGVLSACY). Residues 562–571 (HVCPNYSNFQ) are Extracellular-facing. Asn-566 is a glycosylation site (N-linked (GlcNAc...) asparagine). A helical membrane pass occupies residues 572 to 589 (FDTSFMYMIAGLCMLKLY). Over 590–599 (QTRHPDINAS) the chain is Cytoplasmic. The helical transmembrane segment at 600–620 (AYSAYASFAVVITLTVLGVVF) threads the bilayer. Residues 621-625 (GKNDV) are Extracellular-facing. Residues 626–646 (WFWIIFSAIHVLASLALSTQI) traverse the membrane as a helical segment. Topologically, residues 647–687 (YYMGRFKIDVSDTDLGIFRRAAMVFYTDCIQQCSRPLYMDR) are cytoplasmic. The helical transmembrane segment at 688-708 (MVLLIVGNLVNWSFALFGLIY) threads the bilayer. The Extracellular portion of the chain corresponds to 709-714 (RPRDFA). Residues 715–735 (SYMLGIFICNLLLYLAFYIIM) traverse the membrane as a helical segment. The Cytoplasmic portion of the chain corresponds to 736–745 (KLRSSEKVLP). A helical transmembrane segment spans residues 746-766 (LPVFCIVATAVVWAAALYFFF). The Extracellular portion of the chain corresponds to 767 to 795 (QNLSSWEGTPAESREKNRECVLLGFFDDH). Asn-768 is a glycosylation site (N-linked (GlcNAc...) asparagine). A helical transmembrane segment spans residues 796–816 (DIWHFLSATALFFSFLVLLTL). Over 817–831 (DDDLDVVRRDQIPVF) the chain is Cytoplasmic.

Belongs to the SID1 family.

The protein resides in the membrane. In vitro binds long double-stranded RNA (dsRNA) (500 and 700 base pairs), but not dsRNA shorter than 300 bp. Not involved in RNA autophagy, a process in which RNA is directly imported into lysosomes in an ATP-dependent manner, and degraded. This chain is SID1 transmembrane family member 1 (Sidt1), found in Rattus norvegicus (Rat).